Here is a 135-residue protein sequence, read N- to C-terminus: Retinol-binding protein 1 (135 aa).

Trp-9 bears the Omega-N-methylarginine mark. The interval 22-32 (RALDVNVALRK) is important for interaction with STRA6. 3 residues coordinate all-trans-retinol: Lys-41, Met-63, and Gln-109.

It belongs to the calycin superfamily. Fatty-acid binding protein (FABP) family. In terms of assembly, interacts (only as retinol-free apoprotein) with STRA6. In terms of tissue distribution, detected in nearly all the tissues with higher expression in adult ovary, pancreas, pituitary gland and adrenal gland, and fetal liver.

The protein resides in the cytoplasm. The protein localises to the lipid droplet. In terms of biological role, cytoplasmic retinol-binding protein. Accepts retinol from the transport protein STRA6, and thereby contributes to retinol uptake, storage and retinoid homeostasis. This is Retinol-binding protein 1 (RBP1) from Homo sapiens (Human).